We begin with the raw amino-acid sequence, 935 residues long: Transmembrane channel-like protein 1 (935 aa).

2 disordered regions span residues 1–21 (MPRH…DEGK) and 37–204 (ERGK…LGSL). Basic and acidic residues-rich tracts occupy residues 37 to 47 (ERGKIKQASRD), 54 to 79 (RNGE…EKKH), 109 to 136 (DKSS…EKDV), 152 to 163 (NHEKTKQHLKEE), and 172 to 184 (PETT…KSES). The next 10 membrane-spanning stretches (helical) occupy residues 303 to 340 (SSVA…MGKP), 392 to 423 (RMPL…ANEE), 480 to 510 (LTRF…VRRS), 523 to 550 (WWER…ISTL), 555 to 589 (PRIA…QLKR), 633 to 670 (WETM…VRFL), 690 to 710 (VSGN…GAFY), 714 to 736 (LPAL…VMCC), 751 to 774 (NFYM…TIVS), and 818 to 851 (LVLP…KKKL). Basic and acidic residues predominate over residues 874-886 (EQARKAGEQRRNS). The interval 874-935 (EQARKAGEQR…QQPQKNSKKR (62 aa)) is disordered. Polar residues-rich tracts occupy residues 899-919 (SHVS…TSSG) and 926-935 (QQPQKNSKKR).

It belongs to the TMC family. Interacts specifically with isoform CD3 of PCDH15A (via cytoplasmic domain). As to expression, in adults, expression is restricted to the hair cells of inner ear and lateral line organ. Expressed at higher levels in the larval lateral-line neuromasts than in the larval inner ear. Expressed in the sensory hair cell patches of the ear at 4 days post fertilization (dpf).

The protein localises to the cell membrane. It catalyses the reaction Ca(2+)(in) = Ca(2+)(out). In terms of biological role, pore-forming subunit of the mechanotransducer (MET) non-selective cation channel complex located at the tips of hair-cell stereocilia. Highly permeable to calcium and likely transports monovalent cations. The polypeptide is Transmembrane channel-like protein 1 (Danio rerio (Zebrafish)).